Here is a 412-residue protein sequence, read N- to C-terminus: Palmitoyltransferase ZDHHC11 (412 aa).

The Cytoplasmic portion of the chain corresponds to M1–Q42. A helical membrane pass occupies residues V43–F63. The Lumenal segment spans residues L64 to K69. A helical membrane pass occupies residues Y70–A90. The Cytoplasmic portion of the chain corresponds to S91 to S176. One can recognise a DHHC domain in the interval Q125–A175. C155 (S-palmitoyl cysteine intermediate) is an active-site residue. The chain crosses the membrane as a helical span at residues A177–V197. The Lumenal portion of the chain corresponds to N198 to T230. The segment at N198–D412 is mediates interaction with IRF3 and STING1. The chain crosses the membrane as a helical span at residues L231–L251. Over G252–D412 the chain is Cytoplasmic. Residues H374 to D412 are disordered. The segment covering S389–T400 has biased composition (polar residues). A compositionally biased stretch (basic and acidic residues) spans E401 to D412.

The protein belongs to the DHHC palmitoyltransferase family. As to quaternary structure, interacts with IRF3 and STING1; in presence of DNA viruses recruits IRF3 to STING1 promoting IRF3 phosphorylation and activation. As to expression, expressed in testis.

It localises to the endoplasmic reticulum membrane. The enzyme catalyses L-cysteinyl-[protein] + hexadecanoyl-CoA = S-hexadecanoyl-L-cysteinyl-[protein] + CoA. Endoplasmic reticulum-localized palmitoyltransferase that could catalyze the addition of palmitate onto various protein substrates and be involved in a variety of cellular processes. Has a palmitoyltransferase activity toward NCDN and regulates NCDN association with endosome membranes through this palmitoylation. May play a role in cell proliferation. Functionally, also has a palmitoyltransferase activity-independent function in DNA virus-triggered and CGAS-mediated innate immune response. Functions as an adapter that recruits IRF3 to STING1 to promote the activation of that key transcriptional regulator of type I interferon (IFN)-dependent immune response. This is Palmitoyltransferase ZDHHC11 from Homo sapiens (Human).